Consider the following 248-residue polypeptide: Triosephosphate isomerase (248 aa).

Residue Asn-9–Lys-11 participates in substrate binding. Catalysis depends on His-94, which acts as the Electrophile. Catalysis depends on Glu-166, which acts as the Proton acceptor. Substrate-binding positions include Gly-172, Ser-212, and Gly-233 to Gly-234.

This sequence belongs to the triosephosphate isomerase family. In terms of assembly, homodimer.

It localises to the cytoplasm. The enzyme catalyses D-glyceraldehyde 3-phosphate = dihydroxyacetone phosphate. The protein operates within carbohydrate biosynthesis; gluconeogenesis. It functions in the pathway carbohydrate degradation; glycolysis; D-glyceraldehyde 3-phosphate from glycerone phosphate: step 1/1. Functionally, involved in the gluconeogenesis. Catalyzes stereospecifically the conversion of dihydroxyacetone phosphate (DHAP) to D-glyceraldehyde-3-phosphate (G3P). The chain is Triosephosphate isomerase from Alkaliphilus oremlandii (strain OhILAs) (Clostridium oremlandii (strain OhILAs)).